The chain runs to 298 residues: tRNA U34 carboxymethyltransferase (298 aa).

Residues Lys-69, Trp-83, Lys-88, Gly-107, 129 to 131 (DPS), 156 to 157 (VE), Tyr-176, and Arg-291 each bind carboxy-S-adenosyl-L-methionine.

Belongs to the class I-like SAM-binding methyltransferase superfamily. CmoB family. In terms of assembly, homotetramer.

The catalysed reaction is carboxy-S-adenosyl-L-methionine + 5-hydroxyuridine(34) in tRNA = 5-carboxymethoxyuridine(34) in tRNA + S-adenosyl-L-homocysteine + H(+). In terms of biological role, catalyzes carboxymethyl transfer from carboxy-S-adenosyl-L-methionine (Cx-SAM) to 5-hydroxyuridine (ho5U) to form 5-carboxymethoxyuridine (cmo5U) at position 34 in tRNAs. This is tRNA U34 carboxymethyltransferase from Campylobacter curvus (strain 525.92).